The chain runs to 113 residues: Cytochrome c (113 aa).

An N-acetylalanine modification is found at Ala-1. The heme c site is built by Cys-22, Cys-25, and His-26. At Lys-80 the chain carries N6,N6,N6-trimethyllysine. Met-88 serves as a coordination point for heme c. Lys-94 carries the post-translational modification N6,N6,N6-trimethyllysine.

This sequence belongs to the cytochrome c family. Post-translationally, binds 1 heme c group covalently per subunit.

Its subcellular location is the mitochondrion intermembrane space. Its function is as follows. Electron carrier protein. The oxidized form of the cytochrome c heme group can accept an electron from the heme group of the cytochrome c1 subunit of cytochrome reductase. Cytochrome c then transfers this electron to the cytochrome oxidase complex, the final protein carrier in the mitochondrial electron-transport chain. The protein is Cytochrome c of Ginkgo biloba (Ginkgo).